Reading from the N-terminus, the 396-residue chain is Na(+)/H(+) antiporter NhaA (396 aa).

11 helical membrane-spanning segments follow: residues 17–37 (FSGL…NTNF), 59–79 (FSLT…EIGI), 97–117 (ILPG…YNFI), 127–147 (GWAI…KILG), 156–176 (IFLL…IAFF), 181–201 (IDQY…SINY), 206–226 (CIYI…LSGI), 260–280 (SLSF…NSGI), 292–312 (LLPF…VFLF), 333–353 (IAGI…ISNL), and 368–388 (FSIL…LYFL).

This sequence belongs to the NhaA Na(+)/H(+) (TC 2.A.33) antiporter family.

It is found in the cell membrane. It catalyses the reaction Na(+)(in) + 2 H(+)(out) = Na(+)(out) + 2 H(+)(in). Its function is as follows. Na(+)/H(+) antiporter that extrudes sodium in exchange for external protons. In Wigglesworthia glossinidia brevipalpis, this protein is Na(+)/H(+) antiporter NhaA.